Reading from the N-terminus, the 473-residue chain is UDP-N-acetylmuramate--L-alanine ligase (473 aa).

Glycine 119 to threonine 125 contributes to the ATP binding site.

The protein belongs to the MurCDEF family.

It localises to the cytoplasm. The enzyme catalyses UDP-N-acetyl-alpha-D-muramate + L-alanine + ATP = UDP-N-acetyl-alpha-D-muramoyl-L-alanine + ADP + phosphate + H(+). Its pathway is cell wall biogenesis; peptidoglycan biosynthesis. In terms of biological role, cell wall formation. The polypeptide is UDP-N-acetylmuramate--L-alanine ligase (Caulobacter vibrioides (strain NA1000 / CB15N) (Caulobacter crescentus)).